The chain runs to 548 residues: Probable 2,3-bisphosphoglycerate-independent phosphoglycerate mutase (548 aa).

Positions 20 and 73 each coordinate Mn(2+). Ser73 functions as the Phosphoserine intermediate in the catalytic mechanism. Substrate is bound by residues His134, 164 to 165, Arg200, Arg207, 279 to 282, and Lys354; these read RD and RGDR. Positions 422, 426, 463, 464, and 493 each coordinate Mn(2+).

It belongs to the BPG-independent phosphoglycerate mutase family. As to quaternary structure, monomer. The cofactor is Mn(2+).

It catalyses the reaction (2R)-2-phosphoglycerate = (2R)-3-phosphoglycerate. The protein operates within carbohydrate degradation; glycolysis; pyruvate from D-glyceraldehyde 3-phosphate: step 3/5. Catalyzes the interconversion of 2-phosphoglycerate and 3-phosphoglycerate. This is Probable 2,3-bisphosphoglycerate-independent phosphoglycerate mutase (gpmI) from Leptospira interrogans serogroup Icterohaemorrhagiae serovar copenhageni (strain Fiocruz L1-130).